Reading from the N-terminus, the 459-residue chain is tRNA(Ile)-lysidine synthase (459 aa).

An ATP-binding site is contributed by 38–43 (SGGMDS).

Belongs to the tRNA(Ile)-lysidine synthase family.

It localises to the cytoplasm. It catalyses the reaction cytidine(34) in tRNA(Ile2) + L-lysine + ATP = lysidine(34) in tRNA(Ile2) + AMP + diphosphate + H(+). Functionally, ligates lysine onto the cytidine present at position 34 of the AUA codon-specific tRNA(Ile) that contains the anticodon CAU, in an ATP-dependent manner. Cytidine is converted to lysidine, thus changing the amino acid specificity of the tRNA from methionine to isoleucine. In Acinetobacter baylyi (strain ATCC 33305 / BD413 / ADP1), this protein is tRNA(Ile)-lysidine synthase.